Here is a 430-residue protein sequence, read N- to C-terminus: Glutamine synthetase, chloroplastic/mitochondrial (430 aa).

Residues 1–45 constitute a chloroplast and mitochondrion transit peptide; that stretch reads MAQILAASPTCQMRVPKHSSVIASSSKLWSSVVLKQKKQSNNKVR. The region spanning 77–157 is the GS beta-grasp domain; that stretch reads IIAEYIWIGG…VICDTWTPAG (81 aa). Positions 97–122 are disordered; sequence TIEKPVEDPSELPKWNYDGSSTGQAP. The residue at position 106 (Ser-106) is a Phosphoserine. The GS catalytic domain occupies 161-430; sequence PTNKRAKAAE…LAAQKLSLNV (270 aa).

Belongs to the glutamine synthetase family. As to quaternary structure, homooctamer. As to expression, expressed in mesophyll and epidermal cells of leaves.

Its subcellular location is the plastid. It is found in the chloroplast. The protein localises to the mitochondrion. The catalysed reaction is L-glutamate + NH4(+) + ATP = L-glutamine + ADP + phosphate + H(+). Its function is as follows. The light-modulated chloroplast/mitochondrial enzyme, encoded by a nuclear gene and expressed primarily in leaves, is responsible for the reassimilation of the ammonia generated by photorespiration. The protein is Glutamine synthetase, chloroplastic/mitochondrial (GLN2) of Arabidopsis thaliana (Mouse-ear cress).